A 437-amino-acid polypeptide reads, in one-letter code: Asparagine--tRNA ligase (437 aa).

This sequence belongs to the class-II aminoacyl-tRNA synthetase family. In terms of assembly, homodimer.

Its subcellular location is the cytoplasm. The enzyme catalyses tRNA(Asn) + L-asparagine + ATP = L-asparaginyl-tRNA(Asn) + AMP + diphosphate + H(+). The sequence is that of Asparagine--tRNA ligase from Symbiobacterium thermophilum (strain DSM 24528 / JCM 14929 / IAM 14863 / T).